Reading from the N-terminus, the 256-residue chain is tRNA pseudouridine synthase A (256 aa).

The Nucleophile role is filled by D55. Residue Y113 coordinates substrate.

It belongs to the tRNA pseudouridine synthase TruA family. As to quaternary structure, homodimer.

It carries out the reaction uridine(38/39/40) in tRNA = pseudouridine(38/39/40) in tRNA. In terms of biological role, formation of pseudouridine at positions 38, 39 and 40 in the anticodon stem and loop of transfer RNAs. The protein is tRNA pseudouridine synthase A of Ligilactobacillus salivarius (strain UCC118) (Lactobacillus salivarius).